The following is a 371-amino-acid chain: N-acetyldiaminopimelate deacetylase (371 aa).

Aspartate 68 is an active-site residue. The Proton acceptor role is filled by glutamate 127.

The protein belongs to the peptidase M20A family. N-acetyldiaminopimelate deacetylase subfamily.

It catalyses the reaction N-acetyl-(2S,6S)-2,6-diaminopimelate + H2O = (2S,6S)-2,6-diaminopimelate + acetate. The protein operates within amino-acid biosynthesis; L-lysine biosynthesis via DAP pathway; LL-2,6-diaminopimelate from (S)-tetrahydrodipicolinate (acetylase route): step 3/3. Catalyzes the conversion of N-acetyl-diaminopimelate to diaminopimelate and acetate. The sequence is that of N-acetyldiaminopimelate deacetylase from Listeria welshimeri serovar 6b (strain ATCC 35897 / DSM 20650 / CCUG 15529 / CIP 8149 / NCTC 11857 / SLCC 5334 / V8).